The following is a 213-amino-acid chain: Protein GET1 (213 aa).

The Lumenal segment spans residues 1-4 (MPSL). The chain crosses the membrane as a helical span at residues 5-24 (LLVVFILQFLLHIINTVGAS). At 25–110 (TVNDLLWILY…AFTSAVSTLR (86 aa)) the chain is on the cytoplasmic side. A coiled-coil region spans residues 41–68 (TSSSAQKAQKLKKEIVQLKRELGATSAQ). Residues 111 to 131 (WLGTQGLRFVLQFWFAKSPMF) traverse the membrane as a helical segment. The Lumenal portion of the chain corresponds to 132-155 (WMPAGWLPFYVEWILSFPRAPLGS). The helical transmembrane segment at 156–172 (VSINVWGIACASMIALA) threads the bilayer. At 173 to 213 (AEGLAAVWVLATKRPTPIATEKKEAMAFAADQKSSGEKKEL) the chain is on the cytoplasmic side.

Belongs to the WRB/GET1 family. As to quaternary structure, interacts with GET3.

The protein resides in the endoplasmic reticulum membrane. Its function is as follows. Required for the post-translational delivery of tail-anchored (TA) proteins to the endoplasmic reticulum. Acts as a membrane receptor for soluble GET3, which recognizes and selectively binds the transmembrane domain of TA proteins in the cytosol. In Phaeosphaeria nodorum (strain SN15 / ATCC MYA-4574 / FGSC 10173) (Glume blotch fungus), this protein is Protein GET1.